The chain runs to 779 residues: Endonuclease MutS2 (779 aa).

An ATP-binding site is contributed by 328–335; sequence GPNTGGKT. Residues 704–779 form the Smr domain; that stretch reads LDLRGKRYEE…GSGATIVTLG (76 aa).

It belongs to the DNA mismatch repair MutS family. MutS2 subfamily. In terms of assembly, homodimer. Binds to stalled ribosomes, contacting rRNA.

Functionally, endonuclease that is involved in the suppression of homologous recombination and thus may have a key role in the control of bacterial genetic diversity. Its function is as follows. Acts as a ribosome collision sensor, splitting the ribosome into its 2 subunits. Detects stalled/collided 70S ribosomes which it binds and splits by an ATP-hydrolysis driven conformational change. Acts upstream of the ribosome quality control system (RQC), a ribosome-associated complex that mediates the extraction of incompletely synthesized nascent chains from stalled ribosomes and their subsequent degradation. Probably generates substrates for RQC. The protein is Endonuclease MutS2 of Streptococcus pyogenes serotype M18 (strain MGAS8232).